Consider the following 347-residue polypeptide: Phosphoribosylformylglycinamidine cyclo-ligase (347 aa).

The protein belongs to the AIR synthase family.

The protein resides in the cytoplasm. The enzyme catalyses 2-formamido-N(1)-(5-O-phospho-beta-D-ribosyl)acetamidine + ATP = 5-amino-1-(5-phospho-beta-D-ribosyl)imidazole + ADP + phosphate + H(+). It participates in purine metabolism; IMP biosynthesis via de novo pathway; 5-amino-1-(5-phospho-D-ribosyl)imidazole from N(2)-formyl-N(1)-(5-phospho-D-ribosyl)glycinamide: step 2/2. In Prochlorococcus marinus (strain MIT 9312), this protein is Phosphoribosylformylglycinamidine cyclo-ligase.